Reading from the N-terminus, the 125-residue chain is Egg cell-secreted protein 1.2 (125 aa).

Residues 1–22 (MASNTSFLFATIAILLVLNISG) form the signal peptide.

It belongs to the plant egg cell-secreted peptide family. In terms of tissue distribution, restricted to female reproductive tissues, specifically accumulating in storage vesicles of the unfertilized egg cell.

It localises to the cytoplasmic vesicle. The protein localises to the secreted. Its function is as follows. Involved in the regulation of gamete interactions during the double fertilization and to prevent multiple-pollen tube attraction; mediates the redistribution of the gamete fusogen HAP2/GCS1 to the cell surface after secretion upon sperm arrival. This is Egg cell-secreted protein 1.2 (EC1.2) from Arabidopsis thaliana (Mouse-ear cress).